Reading from the N-terminus, the 87-residue chain is Neutrophil antibiotic peptide NP-3B (87 aa).

The N-terminal stretch at 1–19 (MRTLILLTTLLLLALHTQA) is a signal peptide. Positions 20 to 58 (ESPQGSTKEAPDEEQDISVFFGGDKGTALQDAAVKAGVT) are excised as a propeptide. 3 disulfides stabilise this stretch: Cys-59/Cys-87, Cys-61/Cys-76, and Cys-66/Cys-86.

The protein belongs to the alpha-defensin family.

The protein resides in the secreted. Functionally, active in vitro against S.aureus, fungi, Gram-positive and Gram-negative bacteria and to a lesser extent against an enveloped virus. The chain is Neutrophil antibiotic peptide NP-3B from Rattus norvegicus (Rat).